Reading from the N-terminus, the 196-residue chain is Carnitine operon protein CaiE (196 aa).

Residues 173-196 are disordered; that stretch reads TQPLRQMEENRPRLQGTTDVTPKR. Polar residues predominate over residues 187-196; it reads QGTTDVTPKR.

The protein belongs to the transferase hexapeptide repeat family.

It functions in the pathway amine and polyamine metabolism; carnitine metabolism. Its function is as follows. Overproduction of CaiE stimulates the activity of CaiB and CaiD. This is Carnitine operon protein CaiE from Escherichia coli O139:H28 (strain E24377A / ETEC).